Here is a 124-residue protein sequence, read N- to C-terminus: Small ribosomal subunit protein uS12 (124 aa).

At aspartate 89 the chain carries 3-methylthioaspartic acid. Positions 103 to 124 are disordered; it reads DTAGVKDRRQSRSKYGAKSPKE.

It belongs to the universal ribosomal protein uS12 family. In terms of assembly, part of the 30S ribosomal subunit. Contacts proteins S8 and S17. May interact with IF1 in the 30S initiation complex.

With S4 and S5 plays an important role in translational accuracy. Functionally, interacts with and stabilizes bases of the 16S rRNA that are involved in tRNA selection in the A site and with the mRNA backbone. Located at the interface of the 30S and 50S subunits, it traverses the body of the 30S subunit contacting proteins on the other side and probably holding the rRNA structure together. The combined cluster of proteins S8, S12 and S17 appears to hold together the shoulder and platform of the 30S subunit. The sequence is that of Small ribosomal subunit protein uS12 from Prochlorococcus marinus (strain NATL1A).